The chain runs to 158 residues: MKFLILALCVAAAMAGPSGDQIAAAKASWNTVKNNQVDILYAVFKANPDIQTAFSQFAGKDLDSIKGTPDFSKHAGRVVGLFSEVMDLLGNDANTPTILAKAKDFGKSHKSRASPAQLDNFRKSLVVYLKGATKWDSAVESSWAPVLDFVFSTLKNEL.

A signal peptide spans 1–15; the sequence is MKFLILALCVAAAMA. The 143-residue stretch at 16–158 folds into the Globin domain; the sequence is GPSGDQIAAA…FVFSTLKNEL (143 aa). His74 and His109 together coordinate heme b.

It belongs to the globin family. Monomer.

The polypeptide is Globin CTT-I/CTT-IA (CTT-1) (Chironomus thummi thummi (Midge)).